We begin with the raw amino-acid sequence, 391 residues long: Phosphoglycerate kinase (391 aa).

Substrate contacts are provided by residues 21–23 (DLN), Arg-36, 59–62 (HLGR), Arg-113, and Arg-146. ATP contacts are provided by residues Lys-197, Glu-319, and 345-348 (GGDT).

It belongs to the phosphoglycerate kinase family. In terms of assembly, monomer.

It localises to the cytoplasm. It carries out the reaction (2R)-3-phosphoglycerate + ATP = (2R)-3-phospho-glyceroyl phosphate + ADP. It functions in the pathway carbohydrate degradation; glycolysis; pyruvate from D-glyceraldehyde 3-phosphate: step 2/5. This is Phosphoglycerate kinase from Shewanella sp. (strain W3-18-1).